Reading from the N-terminus, the 247-residue chain is tRNA pseudouridine synthase A (247 aa).

Asp-52 (nucleophile) is an active-site residue. Tyr-113 lines the substrate pocket.

Belongs to the tRNA pseudouridine synthase TruA family. In terms of assembly, homodimer.

It carries out the reaction uridine(38/39/40) in tRNA = pseudouridine(38/39/40) in tRNA. Formation of pseudouridine at positions 38, 39 and 40 in the anticodon stem and loop of transfer RNAs. This Bartonella tribocorum (strain CIP 105476 / IBS 506) protein is tRNA pseudouridine synthase A.